The primary structure comprises 284 residues: Pantothenate synthetase (284 aa).

30-37 lines the ATP pocket; the sequence is MGNLHDGH. The active-site Proton donor is the His37. Gln61 provides a ligand contact to (R)-pantoate. Residue Gln61 coordinates beta-alanine. Position 149–152 (149–152) interacts with ATP; it reads GEKD. Gln155 provides a ligand contact to (R)-pantoate. ATP is bound by residues Ile178 and 186–189; that span reads LSSR.

The protein belongs to the pantothenate synthetase family. In terms of assembly, homodimer.

The protein resides in the cytoplasm. The catalysed reaction is (R)-pantoate + beta-alanine + ATP = (R)-pantothenate + AMP + diphosphate + H(+). It functions in the pathway cofactor biosynthesis; (R)-pantothenate biosynthesis; (R)-pantothenate from (R)-pantoate and beta-alanine: step 1/1. Functionally, catalyzes the condensation of pantoate with beta-alanine in an ATP-dependent reaction via a pantoyl-adenylate intermediate. This chain is Pantothenate synthetase, found in Salmonella paratyphi B (strain ATCC BAA-1250 / SPB7).